The following is a 297-amino-acid chain: N-acetylmuramic acid 6-phosphate etherase (297 aa).

The SIS domain occupies Ala55–Lys218. Glu83 functions as the Proton donor in the catalytic mechanism. Glu114 is an active-site residue.

The protein belongs to the GCKR-like family. MurNAc-6-P etherase subfamily. In terms of assembly, homodimer.

It carries out the reaction N-acetyl-D-muramate 6-phosphate + H2O = N-acetyl-D-glucosamine 6-phosphate + (R)-lactate. It participates in amino-sugar metabolism; 1,6-anhydro-N-acetylmuramate degradation. Its pathway is amino-sugar metabolism; N-acetylmuramate degradation. It functions in the pathway cell wall biogenesis; peptidoglycan recycling. Its function is as follows. Specifically catalyzes the cleavage of the D-lactyl ether substituent of MurNAc 6-phosphate, producing GlcNAc 6-phosphate and D-lactate. Together with AnmK, is also required for the utilization of anhydro-N-acetylmuramic acid (anhMurNAc) either imported from the medium or derived from its own cell wall murein, and thus plays a role in cell wall recycling. The protein is N-acetylmuramic acid 6-phosphate etherase of Salmonella paratyphi A (strain ATCC 9150 / SARB42).